A 34-amino-acid chain; its full sequence is Photosystem II reaction center protein M (34 aa).

Residues 5-25 (ILGLMAVALFILIPTSFLLIL) traverse the membrane as a helical segment.

The protein belongs to the PsbM family. As to quaternary structure, PSII is composed of 1 copy each of membrane proteins PsbA, PsbB, PsbC, PsbD, PsbE, PsbF, PsbH, PsbI, PsbJ, PsbK, PsbL, PsbM, PsbT, PsbX, PsbY, PsbZ, Psb30/Ycf12, at least 3 peripheral proteins of the oxygen-evolving complex and a large number of cofactors. It forms dimeric complexes.

The protein localises to the plastid. The protein resides in the chloroplast thylakoid membrane. Its function is as follows. One of the components of the core complex of photosystem II (PSII). PSII is a light-driven water:plastoquinone oxidoreductase that uses light energy to abstract electrons from H(2)O, generating O(2) and a proton gradient subsequently used for ATP formation. It consists of a core antenna complex that captures photons, and an electron transfer chain that converts photonic excitation into a charge separation. This subunit is found at the monomer-monomer interface. The sequence is that of Photosystem II reaction center protein M from Tupiella akineta (Green alga).